Reading from the N-terminus, the 329-residue chain is Holliday junction branch migration complex subunit RuvB (329 aa).

The interval 1–180 is large ATPase domain (RuvB-L); the sequence is MKNILQSTEC…FGIPIHLEFY (180 aa). ATP contacts are provided by residues Arg20, Gly61, Lys64, Thr65, Thr66, 127-129, Arg170, Tyr180, and Arg217; that span reads EDF. Thr65 is a binding site for Mg(2+). Residues 181-252 are small ATPAse domain (RuvB-S); that stretch reads STEELTKVIQ…FADKALLRLG (72 aa). The head domain (RuvB-H) stretch occupies residues 255–329; the sequence is KLGLDRQDIQ…ISHLREQEYI (75 aa). DNA is bound by residues Arg308 and Arg313.

Belongs to the RuvB family. In terms of assembly, homohexamer. Forms an RuvA(8)-RuvB(12)-Holliday junction (HJ) complex. HJ DNA is sandwiched between 2 RuvA tetramers; dsDNA enters through RuvA and exits via RuvB. An RuvB hexamer assembles on each DNA strand where it exits the tetramer. Each RuvB hexamer is contacted by two RuvA subunits (via domain III) on 2 adjacent RuvB subunits; this complex drives branch migration. In the full resolvosome a probable DNA-RuvA(4)-RuvB(12)-RuvC(2) complex forms which resolves the HJ.

The protein resides in the cytoplasm. It carries out the reaction ATP + H2O = ADP + phosphate + H(+). Functionally, the RuvA-RuvB-RuvC complex processes Holliday junction (HJ) DNA during genetic recombination and DNA repair, while the RuvA-RuvB complex plays an important role in the rescue of blocked DNA replication forks via replication fork reversal (RFR). RuvA specifically binds to HJ cruciform DNA, conferring on it an open structure. The RuvB hexamer acts as an ATP-dependent pump, pulling dsDNA into and through the RuvAB complex. RuvB forms 2 homohexamers on either side of HJ DNA bound by 1 or 2 RuvA tetramers; 4 subunits per hexamer contact DNA at a time. Coordinated motions by a converter formed by DNA-disengaged RuvB subunits stimulates ATP hydrolysis and nucleotide exchange. Immobilization of the converter enables RuvB to convert the ATP-contained energy into a lever motion, pulling 2 nucleotides of DNA out of the RuvA tetramer per ATP hydrolyzed, thus driving DNA branch migration. The RuvB motors rotate together with the DNA substrate, which together with the progressing nucleotide cycle form the mechanistic basis for DNA recombination by continuous HJ branch migration. Branch migration allows RuvC to scan DNA until it finds its consensus sequence, where it cleaves and resolves cruciform DNA. This Ehrlichia chaffeensis (strain ATCC CRL-10679 / Arkansas) protein is Holliday junction branch migration complex subunit RuvB.